The following is a 570-amino-acid chain: 15-cis-phytoene desaturase, chloroplastic/chromoplastic (570 aa).

The N-terminal 91 residues, 1–91 (MSIVGLVSVV…AQLSASFRSS (91 aa)), are a transit peptide targeting the chloroplast and chromoplast. Residues 104–120 (GAGL…ADAG), Ala-108, 127–128 (ES), Lys-135, 152–153 (HI), and Tyr-158 each bind FAD. Arg-293 lines the substrate pocket. Asp-524 serves as a coordination point for FAD. Residue Ala-532 participates in substrate binding. Met-534 is an FAD binding site.

It belongs to the carotenoid/retinoid oxidoreductase family. Homotetramer. Requires FAD as cofactor. Expressed more strongly in flowers than in leaves.

Its subcellular location is the plastid. The protein localises to the chloroplast. It is found in the chromoplast. It localises to the membrane. It catalyses the reaction 2 a plastoquinone + 15-cis-phytoene = 9,9',15-tri-cis-zeta-carotene + 2 a plastoquinol. Its pathway is carotenoid biosynthesis; lycopene biosynthesis. In terms of biological role, converts phytoene into zeta-carotene via the intermediary of phytofluene by the symmetrical introduction of two double bonds at the C-11 and C-11' positions of phytoene with a concomitant isomerization of two neighboring double bonds at the C9 and C9' positions from trans to cis. In Narcissus pseudonarcissus (Daffodil), this protein is 15-cis-phytoene desaturase, chloroplastic/chromoplastic (PDS1).